Here is a 906-residue protein sequence, read N- to C-terminus: Protein translocase subunit SecA (906 aa).

Residues Gln-89, 107–111, and Asp-501 each bind ATP; that span reads GEGKT. Zn(2+) is bound by residues Cys-891, Cys-893, Cys-902, and His-903.

It belongs to the SecA family. In terms of assembly, monomer and homodimer. Part of the essential Sec protein translocation apparatus which comprises SecA, SecYEG and auxiliary proteins SecDF-YajC and YidC. The cofactor is Zn(2+).

It localises to the cell inner membrane. It is found in the cytoplasm. It carries out the reaction ATP + H2O + cellular proteinSide 1 = ADP + phosphate + cellular proteinSide 2.. Part of the Sec protein translocase complex. Interacts with the SecYEG preprotein conducting channel. Has a central role in coupling the hydrolysis of ATP to the transfer of proteins into and across the cell membrane, serving both as a receptor for the preprotein-SecB complex and as an ATP-driven molecular motor driving the stepwise translocation of polypeptide chains across the membrane. This is Protein translocase subunit SecA from Parvibaculum lavamentivorans (strain DS-1 / DSM 13023 / NCIMB 13966).